Reading from the N-terminus, the 1419-residue chain is Formin-1 (1419 aa).

The segment at 1 to 622 (MEGTHCTLQL…TAEPQHQSPP (622 aa)) is microtubule-binding. 4 disordered regions span residues 138–194 (DWQG…MGKD), 262–331 (LGRE…KVVA), 343–641 (VVKT…TPKD), and 685–711 (SLTE…DTEE). Over residues 151 to 163 (RSTHGNKKPRRSS) the composition is skewed to basic residues. Residues 298 to 317 (SHQDPEKHPEAEKDEMEKPA) show a composition bias toward basic and acidic residues. A compositionally biased stretch (polar residues) spans 394 to 411 (RSSQSPAGETASISSVSA). The span at 425–438 (IESEKLDEAPEGKR) shows a compositional bias: basic and acidic residues. A mediates interaction with alpha-catenin region spans residues 456–842 (NKRRAGLPLG…LNISSLSQLS (387 aa)). Over residues 504–517 (FNNSASQSSTHKQT) the composition is skewed to polar residues. Residues 520–529 (VPSPLSPRLP) are compositionally biased toward pro residues. Residues 614-623 (AEPQHQSPPG) are compositionally biased toward polar residues. Residues 685 to 694 (SLTEQDDRTP) are compositionally biased toward basic and acidic residues. The stretch at 720–774 (AEYQAAILHLKREHKEEIENLQAQFELRAFHIRGEHAMITARLEETIENLKHELE) forms a coiled coil. Disordered stretches follow at residues 859–978 (GMAS…AIEP) and 1390–1419 (SEKK…VTTN). 2 stretches are compositionally biased toward pro residues: residues 868 to 882 (LPPP…PPLP) and 890 to 958 (PAPP…PPPG). Residues 870 to 957 (PPPASIPPPP…PPGLAPPPPP (88 aa)) form the FH1 domain. The region spanning 972–1388 (RKPAIEPSCP…KMAQESVSKL (417 aa)) is the FH2 domain.

This sequence belongs to the formin homology family. Cappuccino subfamily. In terms of assembly, interacts with alpha-catenin and may interact with tubulin. In terms of processing, phosphorylated on serine and possibly threonine residues.

It is found in the nucleus. The protein resides in the cytoplasm. Its subcellular location is the cell junction. The protein localises to the adherens junction. It localises to the cell membrane. Plays a role in the formation of adherens junction and the polymerization of linear actin cables. This Homo sapiens (Human) protein is Formin-1 (FMN1).